Consider the following 173-residue polypeptide: Crossover junction endodeoxyribonuclease RuvC (173 aa).

Active-site residues include Asp8, Glu67, and Asp139. Mg(2+)-binding residues include Asp8, Glu67, and Asp139.

This sequence belongs to the RuvC family. In terms of assembly, homodimer which binds Holliday junction (HJ) DNA. The HJ becomes 2-fold symmetrical on binding to RuvC with unstacked arms; it has a different conformation from HJ DNA in complex with RuvA. In the full resolvosome a probable DNA-RuvA(4)-RuvB(12)-RuvC(2) complex forms which resolves the HJ. Mg(2+) is required as a cofactor.

The protein localises to the cytoplasm. The enzyme catalyses Endonucleolytic cleavage at a junction such as a reciprocal single-stranded crossover between two homologous DNA duplexes (Holliday junction).. In terms of biological role, the RuvA-RuvB-RuvC complex processes Holliday junction (HJ) DNA during genetic recombination and DNA repair. Endonuclease that resolves HJ intermediates. Cleaves cruciform DNA by making single-stranded nicks across the HJ at symmetrical positions within the homologous arms, yielding a 5'-phosphate and a 3'-hydroxyl group; requires a central core of homology in the junction. The consensus cleavage sequence is 5'-(A/T)TT(C/G)-3'. Cleavage occurs on the 3'-side of the TT dinucleotide at the point of strand exchange. HJ branch migration catalyzed by RuvA-RuvB allows RuvC to scan DNA until it finds its consensus sequence, where it cleaves and resolves the cruciform DNA. This chain is Crossover junction endodeoxyribonuclease RuvC, found in Shewanella pealeana (strain ATCC 700345 / ANG-SQ1).